Consider the following 354-residue polypeptide: UDP-3-O-acylglucosamine N-acyltransferase (354 aa).

Catalysis depends on His245, which acts as the Proton acceptor.

Belongs to the transferase hexapeptide repeat family. LpxD subfamily. In terms of assembly, homotrimer.

It catalyses the reaction a UDP-3-O-[(3R)-3-hydroxyacyl]-alpha-D-glucosamine + a (3R)-hydroxyacyl-[ACP] = a UDP-2-N,3-O-bis[(3R)-3-hydroxyacyl]-alpha-D-glucosamine + holo-[ACP] + H(+). Its pathway is bacterial outer membrane biogenesis; LPS lipid A biosynthesis. Catalyzes the N-acylation of UDP-3-O-acylglucosamine using 3-hydroxyacyl-ACP as the acyl donor. Is involved in the biosynthesis of lipid A, a phosphorylated glycolipid that anchors the lipopolysaccharide to the outer membrane of the cell. The protein is UDP-3-O-acylglucosamine N-acyltransferase of Anaeromyxobacter sp. (strain K).